We begin with the raw amino-acid sequence, 171 residues long: MTKWFNVGKIVNTHGVRGEVRVISRTDFPEERYKVGNTLYIWGEKGTEPLPVKVTSHRQHKTFDLLTFEGYSNVNEVEKFKGSLLKVPEEQLGELAEGEYYYHEVIGCKVVTENGEELGTITEILSPGANDVWVIKRPKGQDLLIPYIDDIVLQVNVEQKQVTIHVMEGLL.

The region spanning 97-170 (EGEYYYHEVI…QVTIHVMEGL (74 aa)) is the PRC barrel domain.

Belongs to the RimM family. As to quaternary structure, binds ribosomal protein uS19.

Its subcellular location is the cytoplasm. An accessory protein needed during the final step in the assembly of 30S ribosomal subunit, possibly for assembly of the head region. Essential for efficient processing of 16S rRNA. May be needed both before and after RbfA during the maturation of 16S rRNA. It has affinity for free ribosomal 30S subunits but not for 70S ribosomes. The chain is Ribosome maturation factor RimM from Bacillus cytotoxicus (strain DSM 22905 / CIP 110041 / 391-98 / NVH 391-98).